The following is a 473-amino-acid chain: 3-isopropylmalate dehydratase large subunit 2 (473 aa).

Residues Cys-350, Cys-410, and Cys-413 each contribute to the [4Fe-4S] cluster site.

This sequence belongs to the aconitase/IPM isomerase family. LeuC type 1 subfamily. In terms of assembly, heterodimer of LeuC and LeuD. [4Fe-4S] cluster is required as a cofactor.

The catalysed reaction is (2R,3S)-3-isopropylmalate = (2S)-2-isopropylmalate. Its pathway is amino-acid biosynthesis; L-leucine biosynthesis; L-leucine from 3-methyl-2-oxobutanoate: step 2/4. Functionally, catalyzes the isomerization between 2-isopropylmalate and 3-isopropylmalate, via the formation of 2-isopropylmaleate. The protein is 3-isopropylmalate dehydratase large subunit 2 of Salmonella typhimurium (strain LT2 / SGSC1412 / ATCC 700720).